The primary structure comprises 128 residues: Large ribosomal subunit protein bL17 (128 aa).

It belongs to the bacterial ribosomal protein bL17 family. In terms of assembly, part of the 50S ribosomal subunit. Contacts protein L32.

This Streptococcus pyogenes serotype M49 (strain NZ131) protein is Large ribosomal subunit protein bL17.